The following is a 200-amino-acid chain: Probable nicotinate-nucleotide adenylyltransferase (200 aa).

It belongs to the NadD family.

The enzyme catalyses nicotinate beta-D-ribonucleotide + ATP + H(+) = deamido-NAD(+) + diphosphate. The protein operates within cofactor biosynthesis; NAD(+) biosynthesis; deamido-NAD(+) from nicotinate D-ribonucleotide: step 1/1. Its function is as follows. Catalyzes the reversible adenylation of nicotinate mononucleotide (NaMN) to nicotinic acid adenine dinucleotide (NaAD). The protein is Probable nicotinate-nucleotide adenylyltransferase of Clostridium acetobutylicum (strain ATCC 824 / DSM 792 / JCM 1419 / IAM 19013 / LMG 5710 / NBRC 13948 / NRRL B-527 / VKM B-1787 / 2291 / W).